A 2371-amino-acid chain; its full sequence is Highly reducing polyketide synthase ntnH (2371 aa).

Residues 10–429 (PSPIAIVGIG…GANAHVILEG (420 aa)) form the Ketosynthase family 3 (KS3) domain. Residues Cys180, His316, and His352 each act as for beta-ketoacyl synthase activity in the active site. The segment at 528 to 796 (FIFTGQGAQW…NSCLSRGADA (269 aa)) is malonyl-CoA:ACP transacylase (MAT) domain. Residues 858–986 (HELLGARVIG…GKVHPGNAST (129 aa)) are N-terminal hotdog fold. Positions 858-1142 (HELLGARVIG…GIRFRILENN (285 aa)) are dehydratase (DH) domain. The 288-residue stretch at 858–1145 (HELLGARVIG…FRILENNRSK (288 aa)) folds into the PKS/mFAS DH domain. Residue His890 is the Proton acceptor; for dehydratase activity of the active site. The C-terminal hotdog fold stretch occupies residues 1001–1145 (VRGVISAKWY…FRILENNRSK (145 aa)). Asp1059 functions as the Proton donor; for dehydratase activity in the catalytic mechanism. A methyltransferase (CMet) domain region spans residues 1309–1456 (FFQLLGHNKK…FENVTAIMDQ (148 aa)). The enoyl reductase (ER) (ER) domain stretch occupies residues 1669 to 1968 (GLLSSLQWQG…GHRPIGAICI (300 aa)). The segment at 1993–2167 (SYVLIGGLGG…ASVIDLGVME (175 aa)) is ketoreductase (KR) domain. Positions 2280–2362 (EDETAVAEFL…DLGKLARSRI (83 aa)) constitute a Carrier domain. Position 2322 is an O-(pantetheine 4'-phosphoryl)serine (Ser2322).

It functions in the pathway secondary metabolite biosynthesis; terpenoid biosynthesis. Functionally, highly reducing polyketide synthase; part of the gene cluster that mediates the biosynthesis of the meroterpenoids nectripenoids A and B, as well as cochliquninone D and isocochliquninone E. The pathway probably begins with the HR-PKS ntnH that catalyzes two chain-extension steps to form a reduced triketide, which then primes the SAT domain in the NR-PKS ntnG to initiate three more cycles of extension to give a linear hexaketide corresponding to the polyketide part of nectripenoids. The FAD-dependent monooxygenase ntnJ then performs an oxidative decarboxylation at C11 of the ntnH/ntnG product, via an electrophilic aromatic hydroxylation with concomitant ipso-decarboxylation. The membrane-bound polyprenyl transferase ntnF then introduces a farnesyl group before the FAD-dependent monooxygenase ntnK functions as the first epoxidase on terminal C12'-C13' olefin, followed by a second epoxidation on C7'-C8' catalyzed by ntnA. The terpene cyclase/mutase ntnI then initiates the sequential tricyclic ring formation through protonation of the terminal epoxide and catalyzes the regioselective and stereoselective 6/6/6-tricyclic ring formation. The cytochrome P450 monooxygenase ntnM may then hydroxylate C1'. The polypeptide is Highly reducing polyketide synthase ntnH (Nectria sp).